A 716-amino-acid polypeptide reads, in one-letter code: Zinc finger CCCH domain-containing protein 30 (716 aa).

ANK repeat units lie at residues 90–120 (DYRTPLMVAATYGSIDVIKLIVSLTDADVNR) and 125–157 (DQTTALHCAASGGAVNAIQVVKLLLAAGADLNL). The interval 201–231 (VTNVPNRSSSPCHSPTGENGGSGSGSPLGSP) is disordered. A compositionally biased stretch (polar residues) spans 203–213 (NVPNRSSSPCH). 2 C3H1-type zinc fingers span residues 306–328 (PCPDFRKGACRRGDMCEYAHGVF) and 336–360 (QYRTRLCKDGTGCARRVCFFAHTPE). The interval 521–562 (FQQQQQQQQSMLSPINTSFSSPKSVDHSLFSGGGRMSPRNVV) is disordered. Positions 530–543 (SMLSPINTSFSSPK) are enriched in polar residues. Position 566 is a phosphoserine (S566). The segment covering 583 to 594 (QQQQQQQQQQHQ) has biased composition (low complexity). Disordered regions lie at residues 583–638 (QQQQ…MSSE) and 667–692 (PAEAKEKAATSSSGEHVMKQPNPVEP). Polar residues predominate over residues 605–630 (TNSSPIVGSPVNNNTWSSKWGSSNGQ).

In Arabidopsis thaliana (Mouse-ear cress), this protein is Zinc finger CCCH domain-containing protein 30.